The sequence spans 156 residues: Ribosome maturation factor RimP (156 aa).

Belongs to the RimP family.

The protein resides in the cytoplasm. Required for maturation of 30S ribosomal subunits. In Oceanobacillus iheyensis (strain DSM 14371 / CIP 107618 / JCM 11309 / KCTC 3954 / HTE831), this protein is Ribosome maturation factor RimP.